A 338-amino-acid chain; its full sequence is Ferredoxin--NADP reductase (338 aa).

Residues D38, Q46, Y51, V91, F125, D291, and T331 each coordinate FAD.

This sequence belongs to the ferredoxin--NADP reductase type 2 family. In terms of assembly, homodimer. Requires FAD as cofactor.

The catalysed reaction is 2 reduced [2Fe-2S]-[ferredoxin] + NADP(+) + H(+) = 2 oxidized [2Fe-2S]-[ferredoxin] + NADPH. The protein is Ferredoxin--NADP reductase of Orientia tsutsugamushi (strain Boryong) (Rickettsia tsutsugamushi).